The chain runs to 66 residues: DNA-binding protein 7d (66 aa).

Residues K5 and K7 each carry the N6-methyllysine; partial modification.

The protein belongs to the 7 kDa DNA-binding/endoribonuclease P2 family. In terms of assembly, monomer. In terms of processing, lys-5 was 70% monomethylated in form 7a, 25% in form 7b, and 20% in form 7d. Lys-7 was 50% monomethylated in form 7a, 40% in form 7b, and 50% in form 7d.

Its subcellular location is the cytoplasm. Can constrain negative DNA supercoils. May be involved in maintaining the integrity of the genome at high temperature. This is DNA-binding protein 7d from Sulfolobus acidocaldarius (strain ATCC 33909 / DSM 639 / JCM 8929 / NBRC 15157 / NCIMB 11770).